A 328-amino-acid chain; its full sequence is GMP reductase (328 aa).

The active-site Thioimidate intermediate is the Cys176. 205 to 228 (IIADGGIRTHGDVAKSIRFGATMV) contributes to the NADP(+) binding site.

It belongs to the IMPDH/GMPR family. GuaC type 2 subfamily.

The enzyme catalyses IMP + NH4(+) + NADP(+) = GMP + NADPH + 2 H(+). Functionally, catalyzes the irreversible NADPH-dependent deamination of GMP to IMP. It functions in the conversion of nucleobase, nucleoside and nucleotide derivatives of G to A nucleotides, and in maintaining the intracellular balance of A and G nucleotides. This chain is GMP reductase, found in Bacillus cereus (strain ATCC 14579 / DSM 31 / CCUG 7414 / JCM 2152 / NBRC 15305 / NCIMB 9373 / NCTC 2599 / NRRL B-3711).